We begin with the raw amino-acid sequence, 177 residues long: Probable chemoreceptor glutamine deamidase CheD (177 aa).

The protein belongs to the CheD family.

The catalysed reaction is L-glutaminyl-[protein] + H2O = L-glutamyl-[protein] + NH4(+). Its function is as follows. Probably deamidates glutamine residues to glutamate on methyl-accepting chemotaxis receptors (MCPs), playing an important role in chemotaxis. This chain is Probable chemoreceptor glutamine deamidase CheD, found in Pseudomonas savastanoi pv. phaseolicola (strain 1448A / Race 6) (Pseudomonas syringae pv. phaseolicola (strain 1448A / Race 6)).